We begin with the raw amino-acid sequence, 765 residues long: Protein suppressor of forked (765 aa).

HAT repeat units follow at residues 46–78, 80–111, 118–153, 164–197, 230–262, 387–420, and 491–527; these read RPIHEVRSLYESLVNVFPTTARYWKLYIEMEMR, RYYERVEKLFQRCLVKILNIDLWKLYLTYVKE, THKEKMAQAYDFALEKIGMDLHSFSIWQDYIYFLRG, QKITAVRRVYQKAVVTPIVGIEQLWKDYIAFEQN, GLNRNLPAVPPTLTKEEVKQVELWKRFITYEKS, LKYEKVHTMYNKLLQLPDIDPTLVYVQYMKFARR, and NEDNNTRVLFERVLSSGGLSPHKSVEVWNRFLEFESN. Disordered stretches follow at residues 595–615 and 727–747; these read GAQSQNTGEVETDSEATPPLP and RRRRLLPGGDDSDDELQTAVP. Ser-738 is subject to Phosphoserine.

Probably interacts with an RNA-binding protein.

The protein localises to the nucleus. Functionally, essential protein, may play a role in mRNA production or stability. This chain is Protein suppressor of forked (su(f)), found in Drosophila melanogaster (Fruit fly).